We begin with the raw amino-acid sequence, 196 residues long: ATP-dependent Clp protease proteolytic subunit (196 aa).

Serine 96 (nucleophile) is an active-site residue. Histidine 121 is an active-site residue.

The protein belongs to the peptidase S14 family. In terms of assembly, fourteen ClpP subunits assemble into 2 heptameric rings which stack back to back to give a disk-like structure with a central cavity, resembling the structure of eukaryotic proteasomes.

The protein resides in the cytoplasm. It catalyses the reaction Hydrolysis of proteins to small peptides in the presence of ATP and magnesium. alpha-casein is the usual test substrate. In the absence of ATP, only oligopeptides shorter than five residues are hydrolyzed (such as succinyl-Leu-Tyr-|-NHMec, and Leu-Tyr-Leu-|-Tyr-Trp, in which cleavage of the -Tyr-|-Leu- and -Tyr-|-Trp bonds also occurs).. Functionally, cleaves peptides in various proteins in a process that requires ATP hydrolysis. Has a chymotrypsin-like activity. Plays a major role in the degradation of misfolded proteins. This is ATP-dependent Clp protease proteolytic subunit from Streptococcus sanguinis (strain SK36).